A 128-amino-acid polypeptide reads, in one-letter code: Ribonuclease P protein component (128 aa).

Belongs to the RnpA family. As to quaternary structure, consists of a catalytic RNA component (M1 or rnpB) and a protein subunit.

The catalysed reaction is Endonucleolytic cleavage of RNA, removing 5'-extranucleotides from tRNA precursor.. Its function is as follows. RNaseP catalyzes the removal of the 5'-leader sequence from pre-tRNA to produce the mature 5'-terminus. It can also cleave other RNA substrates such as 4.5S RNA. The protein component plays an auxiliary but essential role in vivo by binding to the 5'-leader sequence and broadening the substrate specificity of the ribozyme. In Prochlorococcus marinus (strain MIT 9312), this protein is Ribonuclease P protein component.